The sequence spans 64 residues: U-myrmeciitoxin(01)-Mg4b (64 aa).

The N-terminal stretch at 1–25 (MGKIFFFVLMIAIIGSTFLIEEALG) is a signal peptide.

The protein belongs to the ant myrmeciitoxin-01 family. As to quaternary structure, homodimer; disulfide-linked. Contains 2 intrachain disulfide bonds (per chain) and 1 interchain disulfide bond. As to expression, expressed by the venom gland.

The protein resides in the secreted. Its function is as follows. May have antimicrobial properties, like most ant linear peptides. This chain is U-myrmeciitoxin(01)-Mg4b, found in Myrmecia gulosa (Red bulldog ant).